A 333-amino-acid polypeptide reads, in one-letter code: Dehydrodolichyl diphosphate synthase complex subunit Dhdds (333 aa).

The (2E,6E)-farnesyl diphosphate site is built by aspartate 34, glycine 35, arginine 37, arginine 38, and arginine 85. Aspartate 34 lines the Mg(2+) pocket. Arginine 38, arginine 85, arginine 205, arginine 211, and serine 213 together coordinate isopentenyl diphosphate.

Belongs to the UPP synthase family. The active dehydrodolichyl diphosphate synthase complex is a heterotetramer composed of a dimer of heterodimer of DHDDS and NUS1. Interacts with NPC2. Requires Mg(2+) as cofactor.

Its subcellular location is the endoplasmic reticulum membrane. It carries out the reaction n isopentenyl diphosphate + (2E,6E)-farnesyl diphosphate = a di-trans,poly-cis-polyprenyl diphosphate + n diphosphate. The protein operates within protein modification; protein glycosylation. Its pathway is lipid metabolism. With NUS1, forms the dehydrodolichyl diphosphate synthase (DDS) complex, an essential component of the dolichol monophosphate (Dol-P) biosynthetic machinery. Both subunits contribute to enzymatic activity, i.e. condensation of multiple copies of isopentenyl pyrophosphate (IPP) to farnesyl pyrophosphate (FPP) to produce dehydrodolichyl diphosphate (Dedol-PP), a precursor of dolichol phosphate which is utilized as a sugar carrier in protein glycosylation in the endoplasmic reticulum (ER). Synthesizes long-chain polyprenols, mostly of C95 and C100 chain length. Regulates the glycosylation and stability of nascent NPC2, thereby promoting trafficking of LDL-derived cholesterol. In Mus musculus (Mouse), this protein is Dehydrodolichyl diphosphate synthase complex subunit Dhdds.